The primary structure comprises 226 residues: EEF1A lysine methyltransferase 3 (226 aa).

Residues Trp57, 83 to 85, Asp104, Trp133, and Ala150 each bind S-adenosyl-L-methionine; that span reads GAG.

It belongs to the methyltransferase superfamily. METTL21 family. In terms of assembly, interacts with members of the heat shock protein 70 and 90 families and of the TCP-1 chaperonin family, as well as with HSPD1, STIP1 and tubulin; at least some of these proteins may be methylation substrates.

The protein localises to the cytoplasm. It is found in the cytoskeleton. Its subcellular location is the microtubule organizing center. The protein resides in the centrosome. It catalyses the reaction L-lysyl-[protein] + 3 S-adenosyl-L-methionine = N(6),N(6),N(6)-trimethyl-L-lysyl-[protein] + 3 S-adenosyl-L-homocysteine + 3 H(+). The enzyme catalyses L-lysyl-[protein] + S-adenosyl-L-methionine = N(6)-methyl-L-lysyl-[protein] + S-adenosyl-L-homocysteine + H(+). The catalysed reaction is N(6)-methyl-L-lysyl-[protein] + S-adenosyl-L-methionine = N(6),N(6)-dimethyl-L-lysyl-[protein] + S-adenosyl-L-homocysteine + H(+). It carries out the reaction N(6),N(6)-dimethyl-L-lysyl-[protein] + S-adenosyl-L-methionine = N(6),N(6),N(6)-trimethyl-L-lysyl-[protein] + S-adenosyl-L-homocysteine + H(+). Protein-lysine methyltransferase that selectively mono-, di- and trimethylates 'Lys-165' of the translation elongation factors EEF1A1 and EEF1A2 in an aminoacyl-tRNA and GTP-dependent manner. EEF1A1 methylation by EEF1AKMT3 is dynamic as well as inducible by stress conditions, such as ER-stress, and plays a regulatory role on mRNA translation. This is EEF1A lysine methyltransferase 3 from Bos taurus (Bovine).